The chain runs to 427 residues: mRNA cap guanine-N(7) methyltransferase (427 aa).

The tract at residues 1–79 (MSLNYEQNAA…EPETEAASGA (79 aa)) is disordered. 5 positions are modified to phosphoserine: Ser-22, Ser-24, Ser-29, Ser-46, and Ser-48. Positions 44 to 57 (HVSKSPREYYDEPG) are enriched in basic and acidic residues. In terms of domain architecture, mRNA cap 0 methyltransferase spans 103–411 (SKIFFMRNFN…LYLVCAFKKC (309 aa)). Residue 112 to 113 (NN) coordinates mRNA. Lys-116, Cys-143, Asp-165, Asp-202, Gln-225, and Tyr-230 together coordinate S-adenosyl-L-methionine.

It belongs to the class I-like SAM-binding methyltransferase superfamily. mRNA cap 0 methyltransferase family.

The protein localises to the nucleus. The enzyme catalyses a 5'-end (5'-triphosphoguanosine)-ribonucleoside in mRNA + S-adenosyl-L-methionine = a 5'-end (N(7)-methyl 5'-triphosphoguanosine)-ribonucleoside in mRNA + S-adenosyl-L-homocysteine. In terms of biological role, mRNA-capping methyltransferase that methylates the N7 position of the added guanosine to the 5'-cap structure of mRNAs. Binds RNA containing 5'-terminal GpppC. In Drosophila melanogaster (Fruit fly), this protein is mRNA cap guanine-N(7) methyltransferase.